A 262-amino-acid chain; its full sequence is Indole-3-glycerol phosphate synthase (262 aa).

This sequence belongs to the TrpC family.

The enzyme catalyses 1-(2-carboxyphenylamino)-1-deoxy-D-ribulose 5-phosphate + H(+) = (1S,2R)-1-C-(indol-3-yl)glycerol 3-phosphate + CO2 + H2O. The protein operates within amino-acid biosynthesis; L-tryptophan biosynthesis; L-tryptophan from chorismate: step 4/5. This chain is Indole-3-glycerol phosphate synthase, found in Aromatoleum aromaticum (strain DSM 19018 / LMG 30748 / EbN1) (Azoarcus sp. (strain EbN1)).